A 241-amino-acid chain; its full sequence is 1-(5-phosphoribosyl)-5-[(5-phosphoribosylamino)methylideneamino] imidazole-4-carboxamide isomerase (241 aa).

The Proton acceptor role is filled by Asp-11. Catalysis depends on Asp-130, which acts as the Proton donor.

This sequence belongs to the HisA/HisF family.

It localises to the cytoplasm. The catalysed reaction is 1-(5-phospho-beta-D-ribosyl)-5-[(5-phospho-beta-D-ribosylamino)methylideneamino]imidazole-4-carboxamide = 5-[(5-phospho-1-deoxy-D-ribulos-1-ylimino)methylamino]-1-(5-phospho-beta-D-ribosyl)imidazole-4-carboxamide. Its pathway is amino-acid biosynthesis; L-histidine biosynthesis; L-histidine from 5-phospho-alpha-D-ribose 1-diphosphate: step 4/9. In Acidothermus cellulolyticus (strain ATCC 43068 / DSM 8971 / 11B), this protein is 1-(5-phosphoribosyl)-5-[(5-phosphoribosylamino)methylideneamino] imidazole-4-carboxamide isomerase.